The following is a 170-amino-acid chain: RNA polymerase sigma factor TcsR (170 aa).

The interval 122–169 (IKDLTQNEKNILRKIYLHGLRESEISRELNISRQAVNKTHLRALEKLK) is sigma-70 factor domain-4. A DNA-binding region (H-T-H motif) is located at residues 143–162 (ESEISRELNISRQAVNKTHL).

This sequence belongs to the sigma-70 factor family.

Functionally, sigma factors are initiation factors that promote the attachment of RNA polymerase to specific initiation sites and are then released. Transcriptional regulator specifically required to activate expression of the toxin gene locus, composed of tcsL and tcdE/utxA. In Paraclostridium sordellii (strain ATCC 9714 / DSM 2141 / JCM 3814 / LMG 15708 / NCIMB 10717 / 211) (Clostridium sordellii), this protein is RNA polymerase sigma factor TcsR.